Reading from the N-terminus, the 37-residue chain is Large ribosomal subunit protein bL36 (37 aa).

The protein belongs to the bacterial ribosomal protein bL36 family.

The chain is Large ribosomal subunit protein bL36 from Acetivibrio thermocellus (strain ATCC 27405 / DSM 1237 / JCM 9322 / NBRC 103400 / NCIMB 10682 / NRRL B-4536 / VPI 7372) (Clostridium thermocellum).